The sequence spans 311 residues: Methionyl-tRNA formyltransferase (311 aa).

112 to 115 (SLLP) provides a ligand contact to (6S)-5,6,7,8-tetrahydrofolate.

The protein belongs to the Fmt family.

The catalysed reaction is L-methionyl-tRNA(fMet) + (6R)-10-formyltetrahydrofolate = N-formyl-L-methionyl-tRNA(fMet) + (6S)-5,6,7,8-tetrahydrofolate + H(+). In terms of biological role, attaches a formyl group to the free amino group of methionyl-tRNA(fMet). The formyl group appears to play a dual role in the initiator identity of N-formylmethionyl-tRNA by promoting its recognition by IF2 and preventing the misappropriation of this tRNA by the elongation apparatus. The sequence is that of Methionyl-tRNA formyltransferase from Bradyrhizobium diazoefficiens (strain JCM 10833 / BCRC 13528 / IAM 13628 / NBRC 14792 / USDA 110).